Consider the following 200-residue polypeptide: Superoxide dismutase [Mn] 1 (200 aa).

Mn(2+) contacts are provided by histidine 29, histidine 76, aspartate 158, and histidine 162.

Belongs to the iron/manganese superoxide dismutase family. In terms of assembly, homodimer or homotetramer. The cofactor is Mn(2+).

It catalyses the reaction 2 superoxide + 2 H(+) = H2O2 + O2. Inhibited by hydrogen peroxide. Is resistant to cyanide and azide inhibition. Destroys superoxide anion radicals which are normally produced within the cells and which are toxic to biological systems. The polypeptide is Superoxide dismutase [Mn] 1 (sod1) (Halobacterium salinarum (strain ATCC 700922 / JCM 11081 / NRC-1) (Halobacterium halobium)).